The primary structure comprises 586 residues: Alanine racemase ungC (586 aa).

The disordered stretch occupies residues Arg-187–Pro-206. The span at Ser-196 to Pro-206 shows a compositional bias: polar residues.

The protein belongs to the trans-sulfuration enzymes family. Pyridoxal 5'-phosphate serves as cofactor.

It catalyses the reaction L-alanine = D-alanine. It functions in the pathway secondary metabolite biosynthesis. In terms of biological role, alanine racemase; part of the gene cluster that mediates the biosynthesis of the unguisins, gamma-aminobutyric acid (GABA)-containing fungal cyclic heptapeptides with the amino acid sequence cyclo-(D-Ala1-D-Val2-L-Phe3-D-Val4-D-Ala5-D-Trp6-GABA7) for unguisin A and cyclo-(D-Ala1-D-Val2-L-Leu3-D-Val4-D-Ala5-D-Trp6-GABA7) for unguisin B. Within the pathway, the alanine racemase ungC catalyzes the interconversion of L-alanine and D-alanine, providing the D-alanine which is accepted by the first adenylation domain of the nonribosomal peptide synthetase (NRPS) ungA. UngA is the main enzyme within the cluster which condenses the 7 residues using its respective 7 modules. The terminal condensation domain (Ct) is involved in cyclization with D-alanine and thereby releasing of unguisins A and B. Finally, the hydrolase ungD catalyzes the hydrolysis between the D-tryptophan and GABA residues of unguisins A and B to produce the corresponding linear peptides. This is Alanine racemase ungC from Aspergillus violaceofuscus (strain CBS 115571).